The primary structure comprises 440 residues: Chromosomal replication initiator protein DnaA (440 aa).

A domain I, interacts with DnaA modulators region spans residues 1–93 (MNVQLNEIWN…QTPVKPVAQE (93 aa)). The tract at residues 94 to 101 (YTEDSNMS) is domain II. The tract at residues 102-318 (FLNPKYTFDT…GALNRVIAYS (217 aa)) is domain III, AAA+ region. Residues G146, G148, K149, and T150 each coordinate ATP. Residues 319–440 (TLTENIINVD…EEIKKNITGG (122 aa)) are domain IV, binds dsDNA.

This sequence belongs to the DnaA family. Oligomerizes as a right-handed, spiral filament on DNA at oriC.

Its subcellular location is the cytoplasm. Its function is as follows. Plays an essential role in the initiation and regulation of chromosomal replication. ATP-DnaA binds to the origin of replication (oriC) to initiate formation of the DNA replication initiation complex once per cell cycle. Binds the DnaA box (a 9 base pair repeat at the origin) and separates the double-stranded (ds)DNA. Forms a right-handed helical filament on oriC DNA; dsDNA binds to the exterior of the filament while single-stranded (ss)DNA is stabiized in the filament's interior. The ATP-DnaA-oriC complex binds and stabilizes one strand of the AT-rich DNA unwinding element (DUE), permitting loading of DNA polymerase. After initiation quickly degrades to an ADP-DnaA complex that is not apt for DNA replication. Binds acidic phospholipids. This Ruminiclostridium cellulolyticum (strain ATCC 35319 / DSM 5812 / JCM 6584 / H10) (Clostridium cellulolyticum) protein is Chromosomal replication initiator protein DnaA.